Consider the following 502-residue polypeptide: Cytochrome P450 monooxygenase orf6 (502 aa).

The helical transmembrane segment at 3–25 (ALWVLAVALVAYFLCLSIYRLFL) threads the bilayer. The N-linked (GlcNAc...) asparagine glycan is linked to Asn382. Heme is bound at residue Cys445.

It belongs to the cytochrome P450 family. Heme serves as cofactor.

Its subcellular location is the membrane. It functions in the pathway mycotoxin biosynthesis. In terms of biological role, cytochrome P450 monooxygenase; part of the gene cluster that mediates the biosynthesis of brefeldin A (BFA), a protein transport inhibitor that shows antiviral, antifungal, and antitumor properties. The proposed biosynthesis of BFA involves formation of an acyclic polyketide chain that is differentially tailored throughout the backbone. The highly reducing polyketide synthase Bref-PKS is proposed to synthesize the precisely reduced octaketide precursor, which could then be directly offloaded by the thiohydrolase enzyme Bref-TH followed by a cytochrome P450 monooxygenase-mediated formation of the cyclopentane ring and macrocyclization to afford 7-deoxy BFA. Alternatively, the first ring annulation can also occur on the ACP-tethered intermediate before the thiohydrolase release and lactonization. The C7-hydroxylation by another cytochrome P450 monooxygenase is believed to be the final step in the process to obtain the final structure of BFA. In addition to the HRPKS Bref-PKS and the thiohydrolase Bref-TH, the brefeldin A biosynthesis cluster contains 4 cytochrome p450 monooxygenases (called orf3 to orf6), as well a the probable cluster-specific transcription regulator orf8. This Eupenicillium brefeldianum (Penicillium brefeldianum) protein is Cytochrome P450 monooxygenase orf6.